The primary structure comprises 152 residues: uncharacterized protein (152 aa).

Residues Met-1 to Ala-16 form the signal peptide. In terms of domain architecture, Cytochrome c spans Asn-20–Tyr-135. Residues Cys-33, Cys-36, and His-37 each contribute to the heme c site.

This is an uncharacterized protein from Aquifex aeolicus (strain VF5).